The following is a 600-amino-acid chain: MPEIKVTPLGAGQDVGRSCILVSIAGKNVMLDCGMHMGYNDDRRFPDFSYITQNGRLTDFLDCVIISHFHLDHCGALPYFSEMVGYDGPIYMTHPTKAICPILLEDYRKITVDKKGETNFFTSQMIKDCMKKVVAVHLHQTVQVDEELEIKAYYAGHVLGAAMFQIKVGCESVVYTGDYNMTPDRHLGAAWIDKCRPDLLITESTYATTIRDSKRCRERDFLKKVHETVERGGKVLIPVFALGRAQELCILLETFWERMNLKAPIYFSTGLTEKANHYYKLFITWTNQKIRKTFVQRNMFEFKHIKAFDRAFADNPGPMVVFATPGMLHAGQSLQIFRKWAGNEKNMVIMPGYCVQGTVGHKILSGQRKLEMEGRQILEVKMQVEYMSFSAHADAKGIMQLIRQAEPRNVLLVHGEAKKMEFLKQKIEQEFHVNCYMPANGETTTIFTNPSIPVDISLGLLKRETAIGLLPDAKKPKLMHGTLIMKDNSFRLVSPEQALKELGLAEHQLRFTCRVHIQDPRKEHETVLRVYNHLKGVLKDYSVQHLPDGSITVESILIQATAHSEDQGTKVLLVSWTYQDEELGSYLTSLLKKGLPQSTS.

6 residues coordinate Zn(2+): H68, H70, D72, H73, H157, and D178. Positions 68–73 (HFHLDH) match the HXHXDH motif motif. Residue E203 is part of the active site. H414 lines the Zn(2+) pocket. The Nuclear localization signal signature appears at 469–479 (LLPDAKKPKLM).

The protein belongs to the metallo-beta-lactamase superfamily. RNA-metabolizing metallo-beta-lactamase-like family. INTS11 subfamily. As to quaternary structure, component of the Integrator complex, composed of core subunits INTS1, INTS2, INTS3, INTS4, INTS5, INTS6, INTS7, INTS8, INTS9/RC74, INTS10, INTS11/CPSF3L, INTS12, INTS13, INTS14 and INTS15. The core complex associates with protein phosphatase 2A subunits PPP2CA and PPP2R1A, to form the Integrator-PP2A (INTAC) complex. INTS11 is part of the RNA endonuclease subcomplex, composed of INTS4, INTS9, INTS11 and inositol hexakisphosphate (InsP6). The cofactor is Zn(2+).

The protein localises to the nucleus. It is found in the cytoplasm. Its function is as follows. RNA endonuclease component of the integrator complex, a multiprotein complex that terminates RNA polymerase II (Pol II) transcription in the promoter-proximal region of genes. The integrator complex provides a quality checkpoint during transcription elongation by driving premature transcription termination of transcripts that are unfavorably configured for transcriptional elongation: the complex terminates transcription by (1) catalyzing dephosphorylation of the C-terminal domain (CTD) of Pol II subunit POLR2A/RPB1 and SUPT5H/SPT5, (2) degrading the exiting nascent RNA transcript via endonuclease activity and (3) promoting the release of Pol II from bound DNA. The integrator complex is also involved in terminating the synthesis of non-coding Pol II transcripts, such as enhancer RNAs (eRNAs), small nuclear RNAs (snRNAs), telomerase RNAs and long non-coding RNAs (lncRNAs). Within the integrator complex, INTS11 constitutes the RNA endonuclease subunit that degrades exiting nascent RNA transcripts. In Gallus gallus (Chicken), this protein is Integrator complex subunit 11 (INTS11).